The primary structure comprises 669 residues: DNA ligase (669 aa).

35 to 39 (DFEYD) contributes to the NAD(+) binding site. The interval 52–71 (YPEWDSPDSPTHRVGSDKTE) is disordered. Positions 61–71 (PTHRVGSDKTE) are enriched in basic and acidic residues. NAD(+) is bound by residues 84-85 (SL) and Glu115. The active-site N6-AMP-lysine intermediate is Lys117. Positions 138, 175, 290, and 314 each coordinate NAD(+). Zn(2+) contacts are provided by Cys408, Cys411, Cys426, and Cys432. Positions 590–669 (AVSNRLAGKT…EEEFLRLIEE (80 aa)) constitute a BRCT domain.

This sequence belongs to the NAD-dependent DNA ligase family. LigA subfamily. Mg(2+) serves as cofactor. The cofactor is Mn(2+).

It catalyses the reaction NAD(+) + (deoxyribonucleotide)n-3'-hydroxyl + 5'-phospho-(deoxyribonucleotide)m = (deoxyribonucleotide)n+m + AMP + beta-nicotinamide D-nucleotide.. Functionally, DNA ligase that catalyzes the formation of phosphodiester linkages between 5'-phosphoryl and 3'-hydroxyl groups in double-stranded DNA using NAD as a coenzyme and as the energy source for the reaction. It is essential for DNA replication and repair of damaged DNA. This Porphyromonas gingivalis (strain ATCC BAA-308 / W83) protein is DNA ligase.